A 688-amino-acid chain; its full sequence is PTS system glucoside-specific EIICBA component (688 aa).

In terms of domain architecture, PTS EIIC type-1 spans 3-427; the sequence is KKLFGQLQRI…FKLKTPGRED (425 aa). Transmembrane regions (helical) follow at residues 12–32, 81–101, 137–157, 182–202, 223–243, 284–304, 315–335, 340–360, 364–384, and 395–415; these read IGKALMLPVAILPAAGILLAF, LGLAGGDGVAALAALVGYLIM, LVLGIPTLQTGVFGGIIMGAL, FVPIVTSVVAIATGVVLSFAW, LTTFIFGIIERSLIPFGLHHI, AFTTGKYPFMMFGLPAAAFAI, IVGGLMLSAGLTAFLTGITEP, FLFVAPVLYGIHVLLAGTSFL, LLGVKIGMTFSGGFIDYILYG, and LVIPVGIVYAIVYYFLFDFAI. A PTS EIIB type-1 domain is found at 438-519; sequence AKLPFDVLDA…AKIMSGEITK (82 aa). The active-site Phosphocysteine intermediate; for EIIB activity is the Cys-460. The PTS EIIA type-1 domain maps to 560–664; sequence DQVFAGKMMG…SIVTPMIITN (105 aa). Catalysis depends on His-612, which acts as the Tele-phosphohistidine intermediate; for EIIA activity.

The protein resides in the cell membrane. In terms of biological role, the phosphoenolpyruvate-dependent sugar phosphotransferase system (sugar PTS), a major carbohydrate active -transport system, catalyzes the phosphorylation of incoming sugar substrates concomitantly with their translocation across the cell membrane. This system is involved in alpha- and beta-glucoside transport. The sequence is that of PTS system glucoside-specific EIICBA component (glcB) from Staphylococcus aureus (strain MRSA252).